We begin with the raw amino-acid sequence, 430 residues long: Adenylosuccinate synthetase (430 aa).

Residues G12–K18 and G40–T42 each bind GTP. D13 functions as the Proton acceptor in the catalytic mechanism. Residues D13 and G40 each coordinate Mg(2+). IMP contacts are provided by residues D13–K16, N38–H41, T130, R144, Q224, T239, and R303. H41 functions as the Proton donor in the catalytic mechanism. T299 to R305 is a binding site for substrate. GTP is bound by residues R305, K331 to D333, and S413 to S415.

The protein belongs to the adenylosuccinate synthetase family. As to quaternary structure, homodimer. Mg(2+) serves as cofactor.

Its subcellular location is the cytoplasm. It catalyses the reaction IMP + L-aspartate + GTP = N(6)-(1,2-dicarboxyethyl)-AMP + GDP + phosphate + 2 H(+). The protein operates within purine metabolism; AMP biosynthesis via de novo pathway; AMP from IMP: step 1/2. Functionally, plays an important role in the de novo pathway of purine nucleotide biosynthesis. Catalyzes the first committed step in the biosynthesis of AMP from IMP. The sequence is that of Adenylosuccinate synthetase from Rhodopseudomonas palustris (strain HaA2).